Reading from the N-terminus, the 187-residue chain is UPF0301 protein Sbal195_3177 (187 aa).

It belongs to the UPF0301 (AlgH) family.

This chain is UPF0301 protein Sbal195_3177, found in Shewanella baltica (strain OS195).